The following is a 101-amino-acid chain: MSRLELGKEAVALLTLYEEGVKSLAIVDTLRSARQEQYRKHRMPWFLLQTRLQVRVIESAQLGMLPMPIPELLKEAVAVQPLNLNGIAHSSSSINSFLLFE.

The protein localises to the mitochondrion. This is an uncharacterized protein from Arabidopsis thaliana (Mouse-ear cress).